The following is a 31-amino-acid chain: Cytochrome b6-f complex subunit 6 (31 aa).

Residues 4 to 24 (LTSYFGFLLAALTITLALFIG) form a helical membrane-spanning segment.

It belongs to the PetL family. As to quaternary structure, the 4 large subunits of the cytochrome b6-f complex are cytochrome b6, subunit IV (17 kDa polypeptide, PetD), cytochrome f and the Rieske protein, while the 4 small subunits are PetG, PetL, PetM and PetN. The complex functions as a dimer.

It is found in the plastid. Its subcellular location is the chloroplast thylakoid membrane. Component of the cytochrome b6-f complex, which mediates electron transfer between photosystem II (PSII) and photosystem I (PSI), cyclic electron flow around PSI, and state transitions. PetL is important for photoautotrophic growth as well as for electron transfer efficiency and stability of the cytochrome b6-f complex. This chain is Cytochrome b6-f complex subunit 6, found in Triticum aestivum (Wheat).